A 489-amino-acid chain; its full sequence is FK506-binding protein 4 (489 aa).

2 disordered regions span residues proline 40–leucine 157 and glycine 199–threonine 378. Over residues methionine 66 to isoleucine 88 the composition is skewed to acidic residues. A compositionally biased stretch (basic and acidic residues) spans serine 93 to glutamate 109. Acidic residues-rich tracts occupy residues leucine 110–asparagine 125, threonine 143–leucine 157, and glycine 208–aspartate 250. 3 stretches are compositionally biased toward basic and acidic residues: residues alanine 267–aspartate 282, methionine 292–aspartate 303, and glutamate 328–lysine 353. Over residues glutamine 362–threonine 378 the composition is skewed to polar residues. A PPIase FKBP-type domain is found at valine 406 to lysine 489.

This sequence belongs to the FKBP-type PPIase family. FKBP3/4 subfamily. Binds to histones H3 and H4.

It localises to the nucleus. The enzyme catalyses [protein]-peptidylproline (omega=180) = [protein]-peptidylproline (omega=0). Inhibited by both FK506 and rapamycin. Functionally, PPIase that acts as a histone chaperone. Histone proline isomerase that increases the rate of cis-trans isomerization at prolines on the histone H3 N-terminal tail. Proline isomerization influences H3 methylation thereby regulating gene expression. The protein is FK506-binding protein 4 (fpr4) of Aspergillus fumigatus (strain ATCC MYA-4609 / CBS 101355 / FGSC A1100 / Af293) (Neosartorya fumigata).